A 504-amino-acid polypeptide reads, in one-letter code: MEQYKAYLELHRSRYQDILYPLFFRESIYGLAYRHESFFIENVDYNNNFSLLIVKRLSTRMYQQTHFILFVNDSKKNTFVGYNYHFYSQIILEGFGIVVEILFSLQLFSSSFRGLEIVKSYTNLQSIHSIFPFFEDKLIYLNHKSDIRIPYPIHLEILVQILRYSIKDVSFFHLIRLFFYYYSNWNSLFPPKKWIFTFFSKRNRRIFLFLYNLYVWEYESIFLFLRNKSSQLQLKHFRVFFERIFFYEKIKHLVKVSTKNCSYTLFFFKDTFIHYVRYQGKSILVLKNTPFLINKWKYYFIYLWQCHFDIWAGLETIYINELSQYSFHFLGYFLSIPLNLSVVRSQMLQNSFLIQIVIKKLDTIVPIIPLMRSLAKTKFCNVMGHPISKPVWANLSDFDILDRFLRICRNFSHYYNGSAKKKSFYQIKYILRFSCIKTLARKHKSTVRIYLKKLSSEKLLEEFFTEEDLFSLIFPRTSLTLRRFYRGRIWYLDILFRNDFVNYL.

The protein belongs to the intron maturase 2 family. MatK subfamily.

The protein resides in the plastid. It is found in the chloroplast. In terms of biological role, usually encoded in the trnK tRNA gene intron. Probably assists in splicing its own and other chloroplast group II introns. This chain is Maturase K, found in Vigna mungo (Black gram).